Consider the following 283-residue polypeptide: 1D-myo-inositol 2-acetamido-2-deoxy-alpha-D-glucopyranoside deacetylase (283 aa).

The Zn(2+) site is built by H15, D18, and H150.

It belongs to the MshB deacetylase family. Requires Zn(2+) as cofactor.

The enzyme catalyses 1D-myo-inositol 2-acetamido-2-deoxy-alpha-D-glucopyranoside + H2O = 1D-myo-inositol 2-amino-2-deoxy-alpha-D-glucopyranoside + acetate. Its function is as follows. Catalyzes the deacetylation of 1D-myo-inositol 2-acetamido-2-deoxy-alpha-D-glucopyranoside (GlcNAc-Ins) in the mycothiol biosynthesis pathway. The sequence is that of 1D-myo-inositol 2-acetamido-2-deoxy-alpha-D-glucopyranoside deacetylase from Actinosynnema mirum (strain ATCC 29888 / DSM 43827 / JCM 3225 / NBRC 14064 / NCIMB 13271 / NRRL B-12336 / IMRU 3971 / 101).